The primary structure comprises 479 residues: UDP-N-acetylmuramate--L-alanine ligase (479 aa).

114–120 (GTHGKTT) is a binding site for ATP.

This sequence belongs to the MurCDEF family.

The protein resides in the cytoplasm. It catalyses the reaction UDP-N-acetyl-alpha-D-muramate + L-alanine + ATP = UDP-N-acetyl-alpha-D-muramoyl-L-alanine + ADP + phosphate + H(+). It participates in cell wall biogenesis; peptidoglycan biosynthesis. Its function is as follows. Cell wall formation. This is UDP-N-acetylmuramate--L-alanine ligase from Pelodictyon phaeoclathratiforme (strain DSM 5477 / BU-1).